An 809-amino-acid polypeptide reads, in one-letter code: TLR4 interactor with leucine rich repeats (809 aa).

The N-terminal stretch at 1–25 (MEGVGAVRFWLVVCGCLAFPPRAES) is a signal peptide. The region spanning 26–57 (VCPERCDCQHPQHLLCTNRGLRAVPKTSSLPS) is the LRRNT domain. The Extracellular segment spans residues 26 to 694 (VCPERCDCQH…AGGRGGVDYQ (669 aa)). LRR repeat units follow at residues 61–81 (VLTY…DFHR), 84–105 (QLRR…TFEK), 108–129 (RLEE…TLAP), 132–153 (KLRI…SFEG), 156–177 (SLVK…VFAP), 180–201 (NLLY…AFSQ), 204–223 (KLRF…RHAA), 230–251 (SLST…VFQH), 254–275 (RLGL…AFWG), 278–298 (ALRE…TLLE), 302–323 (SLEA…TFGH), and 326–347 (RLRE…IFAA). The N-linked (GlcNAc...) asparagine glycan is linked to asparagine 73. In terms of domain architecture, LRRCT spans 359–416 (NGWTCDCRLRGLKRWMGNWHSQGRLLTVFVQCRHPPALRGKYLDYLDDQLLQNGSCVD). Residue asparagine 411 is glycosylated (N-linked (GlcNAc...) asparagine). Disordered stretches follow at residues 412-462 (GSCV…RGRL) and 483-563 (RLSR…SAVQ). Residues 421–436 (PTAGSRQWPLPTSSEE) show a composition bias toward polar residues. Positions 488–506 (GPGPHQGPSAAAPGSAPQS) are enriched in low complexity. The span at 521–543 (ANLSQTEPTPTSEPASGTPSARD) shows a compositional bias: polar residues. Residues 554 to 563 (ASEQQESAVQ) are compositionally biased toward low complexity. Asparagine 587 carries an N-linked (GlcNAc...) asparagine glycan. A helical membrane pass occupies residues 695-715 (LLTLVLLAVNALLVLLALAAW). Residues 716–809 (GSRWLRRKLR…EDHLLQRFAD (94 aa)) are Cytoplasmic-facing. At serine 796 the chain carries Phosphoserine.

In terms of assembly, belongs to the lipopolysaccharide (LPS) receptor, a multi-protein complex containing at least CD14, MD-2 and TLR4. Interacts with TLR4; this interaction is greatly enhanced by LPS stimulation. Interacts with LPS. In terms of processing, N-glycolysaled. In terms of tissue distribution, highly expressed in brain, spinal cord and lung.

It localises to the membrane. In terms of biological role, component of the TLR4 signaling complex. Mediates the innate immune response to bacterial lipopolysaccharide (LPS) leading to cytokine secretion. The protein is TLR4 interactor with leucine rich repeats (Tril) of Mus musculus (Mouse).